Consider the following 502-residue polypeptide: ATP synthase subunit alpha (502 aa).

170–177 (GDRKTGKT) contacts ATP.

This sequence belongs to the ATPase alpha/beta chains family. As to quaternary structure, F-type ATPases have 2 components, CF(1) - the catalytic core - and CF(0) - the membrane proton channel. CF(1) has five subunits: alpha(3), beta(3), gamma(1), delta(1), epsilon(1). CF(0) has four main subunits: a, b, b' and c.

The protein resides in the cellular thylakoid membrane. It carries out the reaction ATP + H2O + 4 H(+)(in) = ADP + phosphate + 5 H(+)(out). Produces ATP from ADP in the presence of a proton gradient across the membrane. The alpha chain is a regulatory subunit. The protein is ATP synthase subunit alpha of Microcystis aeruginosa (strain NIES-843 / IAM M-2473).